Here is a 434-residue protein sequence, read N- to C-terminus: Protein TolB homolog (434 aa).

Residues 1 to 27 (MRSTRNSFACLCIMLFGMLFVPFTLRA) form the signal peptide. Residues 413-434 (SNQRPLLNMQGEQQQPSWSVSK) form a disordered region.

The protein belongs to the TolB family.

It is found in the periplasm. The sequence is that of Protein TolB homolog from Chlorobaculum tepidum (strain ATCC 49652 / DSM 12025 / NBRC 103806 / TLS) (Chlorobium tepidum).